Reading from the N-terminus, the 301-residue chain is Acetaldehyde dehydrogenase (301 aa).

The active-site Acyl-thioester intermediate is the Cys-130. NAD(+) contacts are provided by residues 161 to 169 (SVGPGTRRN) and Asn-272.

This sequence belongs to the acetaldehyde dehydrogenase family.

It catalyses the reaction acetaldehyde + NAD(+) + CoA = acetyl-CoA + NADH + H(+). This chain is Acetaldehyde dehydrogenase (mhpF), found in Cupriavidus taiwanensis (strain DSM 17343 / BCRC 17206 / CCUG 44338 / CIP 107171 / LMG 19424 / R1) (Ralstonia taiwanensis (strain LMG 19424)).